A 234-amino-acid chain; its full sequence is Glucosamine-6-phosphate deaminase (234 aa).

The active-site Proton acceptor; for enolization step is the D63. The active-site For ring-opening step is N129. Residue H131 is the Proton acceptor; for ring-opening step of the active site. The active-site For ring-opening step is E136.

It belongs to the glucosamine/galactosamine-6-phosphate isomerase family. NagB subfamily.

The catalysed reaction is alpha-D-glucosamine 6-phosphate + H2O = beta-D-fructose 6-phosphate + NH4(+). It functions in the pathway amino-sugar metabolism; N-acetylneuraminate degradation; D-fructose 6-phosphate from N-acetylneuraminate: step 5/5. Its function is as follows. Catalyzes the reversible isomerization-deamination of glucosamine 6-phosphate (GlcN6P) to form fructose 6-phosphate (Fru6P) and ammonium ion. This Listeria monocytogenes serovar 1/2a (strain ATCC BAA-679 / EGD-e) protein is Glucosamine-6-phosphate deaminase.